The sequence spans 416 residues: Glutamyl-tRNA reductase (416 aa).

Residues 49–52 (TCNR), Ser-105, 110–112 (EPQ), and Gln-116 each bind substrate. The active-site Nucleophile is Cys-50. Position 185–190 (185–190 (GAGETI)) interacts with NADP(+).

This sequence belongs to the glutamyl-tRNA reductase family. As to quaternary structure, homodimer.

It carries out the reaction (S)-4-amino-5-oxopentanoate + tRNA(Glu) + NADP(+) = L-glutamyl-tRNA(Glu) + NADPH + H(+). Its pathway is porphyrin-containing compound metabolism; protoporphyrin-IX biosynthesis; 5-aminolevulinate from L-glutamyl-tRNA(Glu): step 1/2. Its function is as follows. Catalyzes the NADPH-dependent reduction of glutamyl-tRNA(Glu) to glutamate 1-semialdehyde (GSA). In Shewanella frigidimarina (strain NCIMB 400), this protein is Glutamyl-tRNA reductase.